We begin with the raw amino-acid sequence, 251 residues long: Adenosylcobinamide-GDP ribazoletransferase (251 aa).

A run of 7 helical transmembrane segments spans residues 36 to 56, 60 to 80, 110 to 130, 141 to 161, 181 to 201, 202 to 222, and 231 to 251; these read LYPFIGLIIGALWYLSFFVLS, VPIMLMAALILTVPYILTGFL, VGAFSVISVVLLLLVEFAGMF, ILIFIPIASRVINGYFIVSQE, EIILLGIYVLVALITFFTLGI, NYLIAILAMGLISFILLLKVK, and DVAGYILVLMEFTGILLLGII.

The protein belongs to the CobS family. Mg(2+) is required as a cofactor.

Its subcellular location is the cell membrane. It catalyses the reaction alpha-ribazole + adenosylcob(III)inamide-GDP = adenosylcob(III)alamin + GMP + H(+). The enzyme catalyses alpha-ribazole 5'-phosphate + adenosylcob(III)inamide-GDP = adenosylcob(III)alamin 5'-phosphate + GMP + H(+). Its pathway is cofactor biosynthesis; adenosylcobalamin biosynthesis; adenosylcobalamin from cob(II)yrinate a,c-diamide: step 7/7. Joins adenosylcobinamide-GDP and alpha-ribazole to generate adenosylcobalamin (Ado-cobalamin). Also synthesizes adenosylcobalamin 5'-phosphate from adenosylcobinamide-GDP and alpha-ribazole 5'-phosphate. This is Adenosylcobinamide-GDP ribazoletransferase from Clostridium perfringens (strain ATCC 13124 / DSM 756 / JCM 1290 / NCIMB 6125 / NCTC 8237 / Type A).